A 371-amino-acid polypeptide reads, in one-letter code: Queuine tRNA-ribosyltransferase (371 aa).

D93 acts as the Proton acceptor in catalysis. Residues 93-97 (DSGGF), D147, Q191, and G218 contribute to the substrate site. Positions 249 to 255 (GVGTPLD) are RNA binding. Catalysis depends on D268, which acts as the Nucleophile. Positions 273 to 277 (TRNAR) are RNA binding; important for wobble base 34 recognition. Zn(2+) is bound by residues C306, C308, C311, and H337.

The protein belongs to the queuine tRNA-ribosyltransferase family. As to quaternary structure, homodimer. Within each dimer, one monomer is responsible for RNA recognition and catalysis, while the other monomer binds to the replacement base PreQ1. Requires Zn(2+) as cofactor.

It catalyses the reaction 7-aminomethyl-7-carbaguanine + guanosine(34) in tRNA = 7-aminomethyl-7-carbaguanosine(34) in tRNA + guanine. It participates in tRNA modification; tRNA-queuosine biosynthesis. In terms of biological role, catalyzes the base-exchange of a guanine (G) residue with the queuine precursor 7-aminomethyl-7-deazaguanine (PreQ1) at position 34 (anticodon wobble position) in tRNAs with GU(N) anticodons (tRNA-Asp, -Asn, -His and -Tyr). Catalysis occurs through a double-displacement mechanism. The nucleophile active site attacks the C1' of nucleotide 34 to detach the guanine base from the RNA, forming a covalent enzyme-RNA intermediate. The proton acceptor active site deprotonates the incoming PreQ1, allowing a nucleophilic attack on the C1' of the ribose to form the product. After dissociation, two additional enzymatic reactions on the tRNA convert PreQ1 to queuine (Q), resulting in the hypermodified nucleoside queuosine (7-(((4,5-cis-dihydroxy-2-cyclopenten-1-yl)amino)methyl)-7-deazaguanosine). In Lawsonia intracellularis (strain PHE/MN1-00), this protein is Queuine tRNA-ribosyltransferase.